A 910-amino-acid polypeptide reads, in one-letter code: Protein CHROMATIN REMODELING 25 (910 aa).

Acidic residues-rich tracts occupy residues M1–S18 and Q26–D39. The interval M1 to D39 is disordered. Residues L198–G371 form the Helicase ATP-binding domain. Residue D211–T218 participates in ATP binding. The DEAH box motif lies at D322–H325. A coiled-coil region spans residues T396 to F417. The Helicase C-terminal domain occupies V538–N696. Positions V828–Q861 are disordered.

Belongs to the SNF2/RAD54 helicase family. In terms of assembly, interacts with RAD51. Binds to the geminivirus mungbean yellow mosaic virus (MYMV) and to the tomato leaf curl virus (ToLCV) replication-associated proteins. Expressed ubiquitously, with the highest levels of expression in flower buds. Present in flower buds (at protein level).

It localises to the nucleus. Its function is as follows. Dissociates RAD51 from nucleoprotein filaments formed on dsDNA. Could be involved in the turnover of RAD51 protein-dsDNA filaments. Addition of RAD54 overcomes inhibition of DNA strand exchange by RAD51 bound to substrate dsDNA. Species preference in the RAD51 dissociation and DNA strand exchange assays underlines the importance of specific RAD54-RAD51 interactions. RAD51 is unable to release dsDNA upon ATP hydrolysis, leaving it stuck on the heteroduplex DNA product after DNA strand exchange. Involved in DNA repair and mitotic recombination. Functions in the homologous recombinational DNA repair (RAD52) pathway. Required for synthesis-dependent strand annealing (SDSA) during double-strand break repair. Functionally, facilitates geminiviral replication (e.g. geminivirus mungbean yellow mosaic virus (MYMV) and tomato leaf curl virus (ToLCV)). The protein is Protein CHROMATIN REMODELING 25 (CHR25) of Arabidopsis thaliana (Mouse-ear cress).